Reading from the N-terminus, the 108-residue chain is Putative disulfide oxidoreductase YuzD (108 aa).

An intrachain disulfide couples cysteine 16 to cysteine 19.

The chain is Putative disulfide oxidoreductase YuzD (yuzD) from Bacillus subtilis (strain 168).